A 428-amino-acid chain; its full sequence is 3-phosphoshikimate 1-carboxyvinyltransferase (428 aa).

The 3-phosphoshikimate site is built by lysine 21, serine 22, and arginine 26. Lysine 21 provides a ligand contact to phosphoenolpyruvate. Phosphoenolpyruvate-binding residues include glycine 91 and arginine 119. 3-phosphoshikimate-binding residues include serine 164, glutamine 166, aspartate 313, and lysine 340. Residue glutamine 166 participates in phosphoenolpyruvate binding. Aspartate 313 acts as the Proton acceptor in catalysis. The phosphoenolpyruvate site is built by arginine 344 and arginine 386.

Belongs to the EPSP synthase family. Monomer.

It is found in the cytoplasm. It catalyses the reaction 3-phosphoshikimate + phosphoenolpyruvate = 5-O-(1-carboxyvinyl)-3-phosphoshikimate + phosphate. It participates in metabolic intermediate biosynthesis; chorismate biosynthesis; chorismate from D-erythrose 4-phosphate and phosphoenolpyruvate: step 6/7. Its function is as follows. Catalyzes the transfer of the enolpyruvyl moiety of phosphoenolpyruvate (PEP) to the 5-hydroxyl of shikimate-3-phosphate (S3P) to produce enolpyruvyl shikimate-3-phosphate and inorganic phosphate. The protein is 3-phosphoshikimate 1-carboxyvinyltransferase of Campylobacter jejuni subsp. jejuni serotype O:6 (strain 81116 / NCTC 11828).